The following is a 575-amino-acid chain: Transcription factor COE2 (575 aa).

The interval 62 to 65 (RKSN) is interaction with DNA. The C5-type zinc finger occupies 150 to 169 (CRVLLTHEVMCSRCCEKKSC). Interaction with DNA stretches follow at residues 196 to 203 (NCLKTAGN) and 235 to 238 (NNSK). In terms of domain architecture, IPT/TIG spans 253-336 (PCIKAISPSE…KGAPGRFIYT (84 aa)). The segment covering 441–453 (STQGNNQGYIRNT) has biased composition (polar residues). Residues 441–479 (STQGNNQGYIRNTSSISPRGYSSSSTPQQSNYSTSSNSM) are disordered. Residues 454-479 (SSISPRGYSSSSTPQQSNYSTSSNSM) show a composition bias toward low complexity.

This sequence belongs to the COE family. In terms of assembly, forms either a homodimer or a heterodimer with a related family member. Interacts with SIX1.

Its subcellular location is the nucleus. Its function is as follows. Transcription factor that, in osteoblasts, activates the decoy receptor for RANKL, TNFRSF11B, which in turn regulates osteoclast differentiation. Acts in synergy with the Wnt-responsive LEF1/CTNNB1 pathway. Recognizes variations of the palindromic sequence 5'-ATTCCCNNGGGAATT-3'. The polypeptide is Transcription factor COE2 (EBF2) (Bos taurus (Bovine)).